Consider the following 431-residue polypeptide: Histidine--tRNA ligase (431 aa).

The protein belongs to the class-II aminoacyl-tRNA synthetase family. In terms of assembly, homodimer.

It localises to the cytoplasm. It carries out the reaction tRNA(His) + L-histidine + ATP = L-histidyl-tRNA(His) + AMP + diphosphate + H(+). This Neisseria meningitidis serogroup B (strain ATCC BAA-335 / MC58) protein is Histidine--tRNA ligase.